A 384-amino-acid polypeptide reads, in one-letter code: GTPase Obg (384 aa).

Positions 1–159 (MKFIDEAKIE…RSLQLELKVL (159 aa)) constitute an Obg domain. The segment at 20 to 46 (ATSFRREKFVPRGGPDGGDGGKGGSVW) is disordered. Residues 33–43 (GPDGGDGGKGG) show a composition bias toward gly residues. Positions 160–348 (ADVGLLGMPN…LVHQINQYLI (189 aa)) constitute an OBG-type G domain. GTP-binding positions include 166–173 (GMPNAGKS), 191–195 (FTTLH), 213–216 (DIPG), 284–287 (NKLD), and 329–331 (SAL). Residues Ser-173 and Thr-193 each contribute to the Mg(2+) site. A disordered region spans residues 364-384 (ATNVEIAEQQPKTDTGVFKPE).

Belongs to the TRAFAC class OBG-HflX-like GTPase superfamily. OBG GTPase family. In terms of assembly, monomer. Mg(2+) is required as a cofactor.

The protein resides in the cytoplasm. In terms of biological role, an essential GTPase which binds GTP, GDP and possibly (p)ppGpp with moderate affinity, with high nucleotide exchange rates and a fairly low GTP hydrolysis rate. Plays a role in control of the cell cycle, stress response, ribosome biogenesis and in those bacteria that undergo differentiation, in morphogenesis control. The chain is GTPase Obg from Neisseria meningitidis serogroup A / serotype 4A (strain DSM 15465 / Z2491).